Reading from the N-terminus, the 340-residue chain is Probable complex I intermediate-associated protein 30, mitochondrial (340 aa).

The protein belongs to the CIA30 family.

The protein resides in the mitochondrion. Functionally, chaperone protein involved in the assembly of the mitochondrial NADH:ubiquinone oxidoreductase complex (complex I). Required for normal growth and reproduction. The chain is Probable complex I intermediate-associated protein 30, mitochondrial (nuaf-1) from Caenorhabditis elegans.